We begin with the raw amino-acid sequence, 225 residues long: NAD(P)H-quinone oxidoreductase subunit K, chloroplastic (225 aa).

Residues Cys43, Cys44, Cys108, and Cys139 each coordinate [4Fe-4S] cluster.

It belongs to the complex I 20 kDa subunit family. In terms of assembly, NDH is composed of at least 16 different subunits, 5 of which are encoded in the nucleus. [4Fe-4S] cluster serves as cofactor.

It localises to the plastid. The protein resides in the chloroplast thylakoid membrane. It catalyses the reaction a plastoquinone + NADH + (n+1) H(+)(in) = a plastoquinol + NAD(+) + n H(+)(out). The enzyme catalyses a plastoquinone + NADPH + (n+1) H(+)(in) = a plastoquinol + NADP(+) + n H(+)(out). In terms of biological role, NDH shuttles electrons from NAD(P)H:plastoquinone, via FMN and iron-sulfur (Fe-S) centers, to quinones in the photosynthetic chain and possibly in a chloroplast respiratory chain. The immediate electron acceptor for the enzyme in this species is believed to be plastoquinone. Couples the redox reaction to proton translocation, and thus conserves the redox energy in a proton gradient. In Olimarabidopsis pumila (Dwarf rocket), this protein is NAD(P)H-quinone oxidoreductase subunit K, chloroplastic.